Consider the following 139-residue polypeptide: Deoxyuridine 5'-triphosphate nucleotidohydrolase (139 aa).

Residues 58-60, N71, 75-77, and M85 contribute to the substrate site; these read RSG and LID.

It belongs to the dUTPase family. It depends on Mg(2+) as a cofactor.

It carries out the reaction dUTP + H2O = dUMP + diphosphate + H(+). It participates in pyrimidine metabolism; dUMP biosynthesis; dUMP from dCTP (dUTP route): step 2/2. Its function is as follows. This enzyme is involved in nucleotide metabolism: it produces dUMP, the immediate precursor of thymidine nucleotides and it decreases the intracellular concentration of dUTP so that uracil cannot be incorporated into DNA. The chain is Deoxyuridine 5'-triphosphate nucleotidohydrolase from Gamma-proteobacterium EBAC31A08.